The sequence spans 769 residues: Glutathione biosynthesis bifunctional protein GshAB (769 aa).

Residues 1–347 form a glutamate--cysteine ligase region; the sequence is MLDSFKENEA…QLADENENNI (347 aa). Positions 514–768 constitute an ATP-grasp domain; the sequence is KLVLAEHGIR…IGDKILDFLF (255 aa). 541–599 contacts ATP; that stretch reads SLFEDKQIVVKPKSTNYGWGISIFKNKFTLEDYQEALNIAFSYDSSVIIEEFIPGDEFR. 3 residues coordinate Mg(2+): Asp-721, Glu-738, and Asn-740. Mn(2+)-binding residues include Asp-721, Glu-738, and Asn-740.

It in the N-terminal section; belongs to the glutamate--cysteine ligase type 1 family. Type 2 subfamily. As to quaternary structure, monomer. The cofactor is Mg(2+). Mn(2+) is required as a cofactor.

It catalyses the reaction L-cysteine + L-glutamate + ATP = gamma-L-glutamyl-L-cysteine + ADP + phosphate + H(+). It carries out the reaction gamma-L-glutamyl-L-cysteine + glycine + ATP = glutathione + ADP + phosphate + H(+). Its pathway is sulfur metabolism; glutathione biosynthesis; glutathione from L-cysteine and L-glutamate: step 1/2. The protein operates within sulfur metabolism; glutathione biosynthesis; glutathione from L-cysteine and L-glutamate: step 2/2. Synthesizes glutathione from L-glutamate and L-cysteine via gamma-L-glutamyl-L-cysteine. The polypeptide is Glutathione biosynthesis bifunctional protein GshAB (Listeria innocua serovar 6a (strain ATCC BAA-680 / CLIP 11262)).